We begin with the raw amino-acid sequence, 217 residues long: Aprataxin-like protein (217 aa).

The region spanning 6–139 (ALKNYVTSPE…HIHVISKDFH (134 aa)) is the HIT domain. 3 interaction with DNA regions span residues 34-38 (DSFPK), 121-132 (HSVPSMANLHIH), and 144-148 (KNKKH). The active-site Nucleophile is histidine 130. Zn(2+) contacts are provided by cysteine 188, cysteine 191, histidine 205, and glutamate 209.

It localises to the nucleus. The protein localises to the cytoplasm. The enzyme catalyses a 5'-end adenosine-5'-diphospho-5'-2'-deoxyribonucleoside-DNA + H2O = a 5'-end 5'-phospho-2'-deoxyribonucleoside-DNA + AMP + 2 H(+). The catalysed reaction is a 5'-end adenosine-5'-diphospho-5'-ribonucleoside-2'-deoxyribonucleotide-DNA + H2O = a 5'-end 5'-phospho-ribonucleoside-2'-deoxyribonucleotide-DNA + AMP + 2 H(+). It carries out the reaction a 3'-end 2'-deoxyribonucleotide-3'-diphospho-5'-guanosine-DNA + H2O = a 3'-end 2'-deoxyribonucleotide 3'-phosphate-DNA + GMP + 2 H(+). In terms of biological role, DNA-binding protein involved in single-strand DNA break repair, double-strand DNA break repair and base excision repair. Resolves abortive DNA ligation intermediates formed either at base excision sites, or when DNA ligases attempt to repair non-ligatable breaks induced by reactive oxygen species. Catalyzes the release of adenylate groups covalently linked to 5'-phosphate termini, resulting in the production of 5'-phosphate termini that can be efficiently rejoined. Likewise, catalyzes the release of 3'-linked guanosine (DNAppG) and inosine (DNAppI) from DNA, but has higher specific activity with 5'-linked adenosine (AppDNA). In Saccharomyces cerevisiae (strain ATCC 204508 / S288c) (Baker's yeast), this protein is Aprataxin-like protein (HNT3).